The sequence spans 109 residues: Cell division protein ZapA (109 aa).

Residues Glu22–Arg99 are a coiled coil.

The protein belongs to the ZapA family. Type 1 subfamily. In terms of assembly, homodimer. Interacts with FtsZ.

It is found in the cytoplasm. In terms of biological role, activator of cell division through the inhibition of FtsZ GTPase activity, therefore promoting FtsZ assembly into bundles of protofilaments necessary for the formation of the division Z ring. It is recruited early at mid-cell but it is not essential for cell division. This is Cell division protein ZapA from Yersinia enterocolitica serotype O:8 / biotype 1B (strain NCTC 13174 / 8081).